Here is a 212-residue protein sequence, read N- to C-terminus: Probable GTP-binding protein EngB (212 aa).

Positions 38–210 (SLPEIAFVGK…KASLAKCIKP (173 aa)) constitute an EngB-type G domain. GTP contacts are provided by residues 46–53 (GKSNVGKS), 73–77 (GRTRQ), 91–94 (DLPG), 158–161 (TKSD), and 189–191 (VSN). Mg(2+)-binding residues include serine 53 and threonine 75.

The protein belongs to the TRAFAC class TrmE-Era-EngA-EngB-Septin-like GTPase superfamily. EngB GTPase family. The cofactor is Mg(2+).

Its function is as follows. Necessary for normal cell division and for the maintenance of normal septation. The protein is Probable GTP-binding protein EngB of Rickettsia peacockii (strain Rustic).